Consider the following 182-residue polypeptide: Large ribosomal subunit protein uL5 (182 aa).

Belongs to the universal ribosomal protein uL5 family. Part of the 50S ribosomal subunit; part of the 5S rRNA/L5/L18/L25 subcomplex. Contacts the 5S rRNA and the P site tRNA. Forms a bridge to the 30S subunit in the 70S ribosome.

Its function is as follows. This is one of the proteins that bind and probably mediate the attachment of the 5S RNA into the large ribosomal subunit, where it forms part of the central protuberance. In the 70S ribosome it contacts protein S13 of the 30S subunit (bridge B1b), connecting the 2 subunits; this bridge is implicated in subunit movement. Contacts the P site tRNA; the 5S rRNA and some of its associated proteins might help stabilize positioning of ribosome-bound tRNAs. This is Large ribosomal subunit protein uL5 from Thermus aquaticus.